A 100-amino-acid polypeptide reads, in one-letter code: Integration host factor subunit alpha (100 aa).

Residues 53–72 (FQLRDKPQRPGRNPKTGEEV) form a disordered region.

This sequence belongs to the bacterial histone-like protein family. As to quaternary structure, heterodimer of an alpha and a beta chain.

Functionally, this protein is one of the two subunits of integration host factor, a specific DNA-binding protein that functions in genetic recombination as well as in transcriptional and translational control. This chain is Integration host factor subunit alpha, found in Neisseria meningitidis serogroup C (strain 053442).